We begin with the raw amino-acid sequence, 135 residues long: L-alanine exporter AlaE (135 aa).

3 helical membrane-spanning segments follow: residues 9 to 29, 75 to 95, and 96 to 116; these read VATV…IAGM, DILA…LIAG, and ASFA…ILLA.

The protein belongs to the AlaE exporter family.

It localises to the cell inner membrane. Its function is as follows. Exports L-alanine. The polypeptide is L-alanine exporter AlaE (Cereibacter sphaeroides (strain ATCC 17023 / DSM 158 / JCM 6121 / CCUG 31486 / LMG 2827 / NBRC 12203 / NCIMB 8253 / ATH 2.4.1.) (Rhodobacter sphaeroides)).